A 100-amino-acid chain; its full sequence is Sodium-influx-stimulating peptide (100 aa).

The N-terminal stretch at methionine 1 to serine 23 is a signal peptide.

Post-translationally, three disulfide bonds are present. In terms of tissue distribution, expressed by the yellow cells, peptidergic (neuroendocrine) neurons of the central nervous system.

Functionally, stimulates integumental Na(+) uptake. Controls the activity of sodium pumps in the integument, pericardium, ureter and nephridial gland. This is Sodium-influx-stimulating peptide (SIS) from Lymnaea stagnalis (Great pond snail).